The sequence spans 359 residues: Putative nucleotidyltransferase MAB21L1 (359 aa).

Residues 23-24 (RK) and 63-66 (YEGL) each bind a ribonucleoside 5'-triphosphate. 2 residues coordinate Mg(2+): Glu-73 and Glu-75. Residues Lys-248 and 252 to 255 (SILK) contribute to the a ribonucleoside 5'-triphosphate site.

The protein belongs to the mab-21 family. As to quaternary structure, monomer. Homodecamer; composed of 2 back to back homopentamers. The protein may exist as monomer in solution and oiligomerizes upon ligand binding.

The protein resides in the nucleus. Its function is as follows. Putative nucleotidyltransferase required for several aspects of embryonic development including normal development of the eye. It is unclear whether it displays nucleotidyltransferase activity in vivo. Binds single-stranded RNA (ssRNA). This is Putative nucleotidyltransferase MAB21L1 (MAB21L1) from Bos taurus (Bovine).